Consider the following 562-residue polypeptide: MRPEPGGCCCRRTVRANGCVANGEVRNGYVRSSAAAAAAAAAGQIHHVTQNGGLYKRPFNEAFEETPMLVAVLTYVGYGVLTLFGYLRDFLRYWRIEKCHHATEREEQKDFVSLYQDFENFYTRNLYMRIRDNWNRPICSVPGARVDIMERQSHDYNWSFKYTGNIIKGVINMGSYNYLGFARNTGSCQEAAAKVLEEYGAGVCSTRQEIGNLDKHEELEELVARFLGVEAAMAYGMGFATNSMNIPALVGKGCLILSDELNHASLVLGARLSGATIRIFKHNNMQSLEKLLKDAIVYGQPRTRRPWKKILILVEGIYSMEGSIVRLPEVIALKKKYKAYLYLDEAHSIGALGPTGRGVVEYFGLDPEDVDVMMGTFTKSFGASGGYIGGKKELIDYLRTHSHSAVYATSLSPPVVEQIITSMKCIMGQDGTSLGKECVQQLAENTRYFRRRLKEMGFIIYGNEDSPVVPLMLYMPAKIGAFGREMLKRNIGVVVVGFPATPIIESRARFCLSAAHTKEILDTALKEIDEVGDLLQLKYSRHRLVPLLDRPFDETTYEETED.

A helical transmembrane segment spans residues 67 to 87 (PMLVAVLTYVGYGVLTLFGYL). Residue K379 is modified to N6-(pyridoxal phosphate)lysine.

The protein belongs to the class-II pyridoxal-phosphate-dependent aminotransferase family. In terms of assembly, component of the serine palmitoyltransferase (SPT) complex, which is composed of SPTLC1, SPTLC2 or SPTLC3 and SPTSSA or SPTSSB. The heterodimer consisting of SPTLC1 and SPTLC2/SPTLC3 forms the catalytic core of the enzyme, while SPTSSA or SPTSSB subunits determine substrate specificity. SPT also interacts with ORMDL proteins, especially ORMDL3, which negatively regulate SPT activity in the presence of ceramides. Forms dimers of heterodimers with SPTLC1. The cofactor is pyridoxal 5'-phosphate. In terms of tissue distribution, widely expressed.

Its subcellular location is the endoplasmic reticulum membrane. It catalyses the reaction L-serine + hexadecanoyl-CoA + H(+) = 3-oxosphinganine + CO2 + CoA. It carries out the reaction octadecanoyl-CoA + L-serine + H(+) = 3-oxoeicosasphinganine + CO2 + CoA. Its pathway is lipid metabolism; sphingolipid metabolism. SPT complex catalytic activity is negatively regulated by ORMDL proteins, including ORMDL3, in the presence of ceramides. This mechanism allows to maintain ceramide levels at sufficient concentrations for the production of complex sphingolipids, but which prevents the accumulation of ceramides to levels that trigger apoptosis. In terms of biological role, component of the serine palmitoyltransferase multisubunit enzyme (SPT) that catalyzes the initial and rate-limiting step in sphingolipid biosynthesis by condensing L-serine and activated acyl-CoA (most commonly palmitoyl-CoA) to form long-chain bases. The SPT complex is composed of SPTLC1, SPTLC2 or SPTLC3 and SPTSSA or SPTSSB. Within this complex, the heterodimer consisting of SPTLC1 and SPTLC2/SPTLC3 forms the catalytic core. The composition of the serine palmitoyltransferase (SPT) complex determines the substrate preference. The SPTLC1-SPTLC2-SPTSSA complex shows a strong preference for C16-CoA substrate, while the SPTLC1-SPTLC3-SPTSSA isozyme uses both C14-CoA and C16-CoA as substrates, with a slight preference for C14-CoA. The SPTLC1-SPTLC2-SPTSSB complex shows a strong preference for C18-CoA substrate, while the SPTLC1-SPTLC3-SPTSSB isozyme displays an ability to use a broader range of acyl-CoAs, without apparent preference. Crucial for adipogenesis. This Homo sapiens (Human) protein is Serine palmitoyltransferase 2.